A 401-amino-acid chain; its full sequence is Imidazolonepropionase (401 aa).

The Fe(3+) site is built by H66 and H68. Zn(2+) is bound by residues H66 and H68. 4-imidazolone-5-propanoate contacts are provided by R75, Y138, and H171. Y138 provides a ligand contact to N-formimidoyl-L-glutamate. Position 236 (H236) interacts with Fe(3+). H236 lines the Zn(2+) pocket. Q239 contributes to the 4-imidazolone-5-propanoate binding site. D311 contributes to the Fe(3+) binding site. Zn(2+) is bound at residue D311. N313 and G315 together coordinate N-formimidoyl-L-glutamate. A 4-imidazolone-5-propanoate-binding site is contributed by T316.

This sequence belongs to the metallo-dependent hydrolases superfamily. HutI family. It depends on Zn(2+) as a cofactor. Fe(3+) serves as cofactor.

The protein resides in the cytoplasm. It carries out the reaction 4-imidazolone-5-propanoate + H2O = N-formimidoyl-L-glutamate. It functions in the pathway amino-acid degradation; L-histidine degradation into L-glutamate; N-formimidoyl-L-glutamate from L-histidine: step 3/3. Its function is as follows. Catalyzes the hydrolytic cleavage of the carbon-nitrogen bond in imidazolone-5-propanoate to yield N-formimidoyl-L-glutamate. It is the third step in the universal histidine degradation pathway. This Pseudomonas syringae pv. tomato (strain ATCC BAA-871 / DC3000) protein is Imidazolonepropionase.